The chain runs to 299 residues: Oxygen-dependent coproporphyrinogen-III oxidase (299 aa).

Serine 92 serves as a coordination point for substrate. Histidine 96 and histidine 106 together coordinate a divalent metal cation. Catalysis depends on histidine 106, which acts as the Proton donor. 108–110 provides a ligand contact to substrate; the sequence is NVR. A divalent metal cation-binding residues include histidine 145 and histidine 175. Positions 240–275 are important for dimerization; sequence YVEFNLVWDRGTLFGLQTGGRTESILMSMPPLVRWE. 258–260 provides a ligand contact to substrate; the sequence is GGR.

This sequence belongs to the aerobic coproporphyrinogen-III oxidase family. In terms of assembly, homodimer. Requires a divalent metal cation as cofactor.

It localises to the cytoplasm. The enzyme catalyses coproporphyrinogen III + O2 + 2 H(+) = protoporphyrinogen IX + 2 CO2 + 2 H2O. Its pathway is porphyrin-containing compound metabolism; protoporphyrin-IX biosynthesis; protoporphyrinogen-IX from coproporphyrinogen-III (O2 route): step 1/1. Functionally, involved in the heme biosynthesis. Catalyzes the aerobic oxidative decarboxylation of propionate groups of rings A and B of coproporphyrinogen-III to yield the vinyl groups in protoporphyrinogen-IX. The chain is Oxygen-dependent coproporphyrinogen-III oxidase from Shigella dysenteriae serotype 1 (strain Sd197).